Here is a 529-residue protein sequence, read N- to C-terminus: Glutamyl-tRNA(Gln) amidotransferase subunit B-2, chloroplastic/mitochondrial (529 aa).

The interval 17–61 (STRVSLPRGSIPPPPTSSSSSSSSSREGRRPRFFSTTTTSAERPV) is disordered.

Belongs to the GatB/GatE family. GatB subfamily. In terms of assembly, subunit of the heterotrimeric GatCAB amidotransferase (AdT) complex, composed of A, B and C subunits.

The protein resides in the mitochondrion. The protein localises to the plastid. It is found in the chloroplast. It carries out the reaction L-glutamyl-tRNA(Gln) + L-glutamine + ATP + H2O = L-glutaminyl-tRNA(Gln) + L-glutamate + ADP + phosphate + H(+). Allows the formation of correctly charged Gln-tRNA(Gln) through the transamidation of misacylated Glu-tRNA(Gln) in chloroplasts and mitochondria. The reaction takes place in the presence of glutamine and ATP through an activated gamma-phospho-Glu-tRNA(Gln). The protein is Glutamyl-tRNA(Gln) amidotransferase subunit B-2, chloroplastic/mitochondrial of Micromonas commoda (strain RCC299 / NOUM17 / CCMP2709) (Picoplanktonic green alga).